The following is a 206-amino-acid chain: Ras-related protein Rab-18 (206 aa).

Methionine 1 carries the N-acetylmethionine modification. Residues serine 17, glycine 20, lysine 21, serine 22, serine 23, aspartate 34, proline 35, threonine 40, glycine 66, lysine 123, and aspartate 125 each contribute to the GTP site. Serine 22 contributes to the Mg(2+) binding site. Short sequence motifs (switch) lie at residues 31-45 (DTFD…GVDF) and 63-80 (DTAG…YYRG). Threonine 40 contributes to the Mg(2+) binding site. At serine 144 the chain carries Phosphoserine. Residue alanine 152 coordinates GTP. A lipid anchor (S-palmitoyl cysteine) is attached at cysteine 199. Cysteine 203 is subject to Cysteine methyl ester. Cysteine 203 is lipidated: S-geranylgeranyl cysteine. Positions 204-206 (SVL) are cleaved as a propeptide — removed in mature form.

The protein belongs to the small GTPase superfamily. Rab family. Interacts (in GTP-bound form) with ZFYVE1. Interacts with ZW10 and this interaction is enhanced in the presence of ZFYVE1. Interacts with BSCL2. The cofactor is Mg(2+).

The protein resides in the endoplasmic reticulum membrane. Its subcellular location is the golgi apparatus. The protein localises to the cis-Golgi network membrane. It localises to the lipid droplet. It is found in the apical cell membrane. The catalysed reaction is GTP + H2O = GDP + phosphate + H(+). With respect to regulation, regulated by guanine nucleotide exchange factors (GEFs) which promote the exchange of bound GDP for free GTP. Regulated by GTPase activating proteins (GAPs) which increase the GTP hydrolysis activity at the ER membrane. Inhibited by GDP dissociation inhibitors (GDIs) which prevent Rab-GDP dissociation. In terms of biological role, the small GTPases Rab are key regulators of intracellular membrane trafficking, from the formation of transport vesicles to their fusion with membranes. Rabs cycle between an inactive GDP-bound form and an active GTP-bound form that is able to recruit to membranes different sets of downstream effectors directly responsible for vesicle formation, movement, tethering and fusion. RAB18 is required for the localization of ZFYVE1 to lipid droplets and for its function in mediating the formation of endoplasmic reticulum-lipid droplets (ER-LD) contacts. Also required for maintaining endoplasmic reticulum structure. Plays a role in apical endocytosis/recycling. Plays a key role in eye and brain development and neurodegeneration. The polypeptide is Ras-related protein Rab-18 (RAB18) (Bos taurus (Bovine)).